Reading from the N-terminus, the 458-residue chain is Protein adenylyltransferase FICD (458 aa).

The Cytoplasmic portion of the chain corresponds to M1–R23. A helical; Signal-anchor for type II membrane protein transmembrane segment spans residues F24–L44. At G45–P458 the chain is on the lumenal side. S79 is subject to O-AMP-serine; by autocatalysis. Position 80 is an O-AMP-threonine; by autocatalysis (T80). TPR repeat units lie at residues A106–F139 and V140–H173. T183 bears the O-AMP-threonine; by autocatalysis mark. The Inhibitory (S/T)XXXE(G/N) motif signature appears at T230–G235. E234 serves as a coordination point for ATP. The N-linked (GlcNAc...) asparagine glycan is linked to N275. In terms of domain architecture, Fido spans V285 to K420. Residue V316–H319 participates in ATP binding. H363 is a catalytic residue. ATP-binding positions include D367 to R374, Y399 to Y400, and N407. The N-linked (GlcNAc...) asparagine glycan is linked to N446.

Belongs to the fic family. As to quaternary structure, homodimer. Interacts with HD. Mg(2+) serves as cofactor. Requires Mn(2+) as cofactor. Auto-AMPylated in vitro; it is unclear whether auto-AMPylation is relevant in vivo. In terms of processing, N-glycosylated; predominantly glycosylated at Asn-275. As to expression, ubiquitous.

It localises to the endoplasmic reticulum membrane. It catalyses the reaction L-tyrosyl-[protein] + ATP = O-(5'-adenylyl)-L-tyrosyl-[protein] + diphosphate. The catalysed reaction is 3-O-(5'-adenylyl)-L-threonyl-[protein] + H2O = L-threonyl-[protein] + AMP + H(+). The enzyme catalyses L-threonyl-[protein] + ATP = 3-O-(5'-adenylyl)-L-threonyl-[protein] + diphosphate. The side chain of Glu-234 determines which of the two opposing activities (AMPylase or de-AMPylase) will take place. In response to endoplasmic reticulum stress, mediates de-AMPylase activity. Adenylyltransferase activity is inhibited by the inhibitory helix present at the N-terminus: Glu-234 binds ATP and competes with ATP-binding at Arg-374, thereby preventing adenylyltransferase activity. In unstressed cells, disengagement of Glu-234 promotes adenylyltransferase activity. Activation dissociates ATP-binding from Glu-234, allowing ordered binding of the entire ATP moiety with the alpha-phosphate in an orientation that is productive for accepting an incoming target hydroxyl side chain. Functionally, protein that can both mediate the addition of adenosine 5'-monophosphate (AMP) to specific residues of target proteins (AMPylation), and the removal of the same modification from target proteins (de-AMPylation), depending on the context. The side chain of Glu-231 determines which of the two opposing activities (AMPylase or de-AMPylase) will take place. Acts as a key regulator of the ERN1/IRE1-mediated unfolded protein response (UPR) by mediating AMPylation or de-AMPylation of HSPA5/BiP. In unstressed cells, acts as an adenylyltransferase by mediating AMPylation of HSPA5/BiP at 'Thr-518', thereby inactivating it. In response to endoplasmic reticulum stress, acts as a phosphodiesterase by mediating removal of ATP (de-AMPylation) from HSPA5/BiP at 'Thr-518', leading to restore HSPA5/BiP activity. Although it is able to AMPylate RhoA, Rac and Cdc42 Rho GTPases in vitro, Rho GTPases do not constitute physiological substrates. This chain is Protein adenylyltransferase FICD, found in Homo sapiens (Human).